A 311-amino-acid chain; its full sequence is Phospho-N-acetylmuramoyl-pentapeptide-transferase (311 aa).

10 helical membrane-spanning segments follow: residues 2–22, 48–68, 74–94, 104–124, 144–164, 168–188, 192–212, 214–234, 237–257, and 288–308; these read ENNV…IEGF, GTPT…LLNF, SFLI…DDFM, ITAV…VYFI, LGWF…NAVN, GVDG…LIVG, VVYL…WHPA, IFMG…SFAL, LELF…SVII, and KIAF…IIGW.

Belongs to the glycosyltransferase 4 family. MraY subfamily. The cofactor is Mg(2+).

The protein localises to the cell inner membrane. It carries out the reaction UDP-N-acetyl-alpha-D-muramoyl-L-alanyl-gamma-D-glutamyl-meso-2,6-diaminopimeloyl-D-alanyl-D-alanine + di-trans,octa-cis-undecaprenyl phosphate = di-trans,octa-cis-undecaprenyl diphospho-N-acetyl-alpha-D-muramoyl-L-alanyl-D-glutamyl-meso-2,6-diaminopimeloyl-D-alanyl-D-alanine + UMP. The protein operates within cell wall biogenesis; peptidoglycan biosynthesis. Its function is as follows. Catalyzes the initial step of the lipid cycle reactions in the biosynthesis of the cell wall peptidoglycan: transfers peptidoglycan precursor phospho-MurNAc-pentapeptide from UDP-MurNAc-pentapeptide onto the lipid carrier undecaprenyl phosphate, yielding undecaprenyl-pyrophosphoryl-MurNAc-pentapeptide, known as lipid I. The chain is Phospho-N-acetylmuramoyl-pentapeptide-transferase from Kosmotoga olearia (strain ATCC BAA-1733 / DSM 21960 / TBF 19.5.1).